The chain runs to 435 residues: Tryptophan--tRNA ligase (435 aa).

Residues 10–12 (TTS) and 18–19 (GN) contribute to the ATP site. A 'HIGH' region motif is present at residues 11 to 19 (TSGTPHLGN). Residue aspartate 143 participates in L-tryptophan binding. ATP-binding positions include 155-157 (GRD), leucine 195, and 202-206 (KMSKS). The 'KMSKS' region signature appears at 202 to 206 (KMSKS).

The protein belongs to the class-I aminoacyl-tRNA synthetase family. Homodimer.

It is found in the cytoplasm. The enzyme catalyses tRNA(Trp) + L-tryptophan + ATP = L-tryptophyl-tRNA(Trp) + AMP + diphosphate + H(+). Functionally, catalyzes the attachment of tryptophan to tRNA(Trp). This is Tryptophan--tRNA ligase from Xylella fastidiosa (strain Temecula1 / ATCC 700964).